The sequence spans 94 residues: DASH complex subunit dad2 (94 aa).

Positions 18–38 form a coiled coil; the sequence is KLRDSSNDMVQQIETLAAKLE. Residues 72–94 are disordered; the sequence is VRIPPSTSNTNASATEQGDVEEV. A compositionally biased stretch (polar residues) spans 76 to 87; sequence PSTSNTNASATE.

This sequence belongs to the DASH complex DAD2 family. As to quaternary structure, component of the DASH complex consisting of ask1, dad1, dad2, dad3, dad4, dam1, duo1, dad5, spc19 and spc34, with a stoichiometry of one copy of each subunit per complex. Multiple DASH complexes oligomerize to form a ring that encircles spindle microtubules and organizes the rod-like NDC80 complexes of the outer kinetochore. DASH complex oligomerization strengthens microtubule attachments. On cytoplasmic microtubules, DASH complexes appear to form patches instead of rings.

It localises to the nucleus. Its subcellular location is the cytoplasm. The protein localises to the cytoskeleton. It is found in the spindle. The protein resides in the chromosome. It localises to the centromere. Its subcellular location is the kinetochore. Its function is as follows. Component of the DASH complex that connects microtubules with kinetochores and couples microtubule depolymerisation to chromosome movement; it is involved in retrieving kinetochores to the spindle poles before their re-orientation on the spindle in early mitosis and allows microtubule depolymerization to pull chromosomes apart and resist detachment during anaphase. Kinetochores, consisting of a centromere-associated inner segment and a microtubule-contacting outer segment, play a crucial role in chromosome segregation by mediating the physical connection between centromeric DNA and microtubules. Kinetochores also serve as an input point for the spindle assembly checkpoint, which delays anaphase until all chromosomes have bioriented on the mitotic spindle. The DASH complex mediates bipolar kinetochore-microtubule attachments and facilitates the formation of additional interactions between outer kinetochore components and spindle microtubules. During chromosome movement along the microtubule, it is required both for the sliding of kinetochores along the lateral side of the microtubule and also for microtubule end-on pulling on the kinetochore. Modulates cytoplasmic microtubule dynamics by tracking the plus-end of shortening microtubules and slowing their depolymerization. The polypeptide is DASH complex subunit dad2 (Schizosaccharomyces pombe (strain 972 / ATCC 24843) (Fission yeast)).